A 534-amino-acid polypeptide reads, in one-letter code: uncharacterized protein (534 aa).

A run of 2 helical transmembrane segments spans residues Ile-149 to Ile-169 and Val-185 to Phe-205.

Its subcellular location is the cell membrane. This is an uncharacterized protein from Mycoplasma pneumoniae (strain ATCC 29342 / M129 / Subtype 1) (Mycoplasmoides pneumoniae).